The sequence spans 263 residues: tRNA pseudouridine synthase A (263 aa).

The Nucleophile role is filled by Asp-57. Tyr-115 serves as a coordination point for substrate.

The protein belongs to the tRNA pseudouridine synthase TruA family. As to quaternary structure, homodimer.

It carries out the reaction uridine(38/39/40) in tRNA = pseudouridine(38/39/40) in tRNA. Functionally, formation of pseudouridine at positions 38, 39 and 40 in the anticodon stem and loop of transfer RNAs. This Buchnera aphidicola subsp. Schizaphis graminum (strain Sg) protein is tRNA pseudouridine synthase A.